Reading from the N-terminus, the 682-residue chain is Glutamine--fructose-6-phosphate aminotransferase [isomerizing] 2 (682 aa).

Catalysis depends on Cys2, which acts as the For GATase activity. The 287-residue stretch at 2–288 folds into the Glutamine amidotransferase type-2 domain; it reads CGIFAYMNYR…DDDIAAVADG (287 aa). Residue Ser244 is modified to Phosphoserine. SIS domains lie at 360–499 and 531–672; these read HLKE…DRIS and LALE…VDFP. Substrate-binding positions include 377 to 378, 422 to 424, Thr427, and His578; these read TS and SQS.

Highest levels of expression in heart, placenta, and spinal cord.

It catalyses the reaction D-fructose 6-phosphate + L-glutamine = D-glucosamine 6-phosphate + L-glutamate. It functions in the pathway nucleotide-sugar biosynthesis; UDP-N-acetyl-alpha-D-glucosamine biosynthesis; alpha-D-glucosamine 6-phosphate from D-fructose 6-phosphate: step 1/1. In terms of biological role, controls the flux of glucose into the hexosamine pathway. Most likely involved in regulating the availability of precursors for N- and O-linked glycosylation of proteins. This Homo sapiens (Human) protein is Glutamine--fructose-6-phosphate aminotransferase [isomerizing] 2 (GFPT2).